We begin with the raw amino-acid sequence, 91 residues long: Small ribosomal subunit protein uS19 (91 aa).

The protein belongs to the universal ribosomal protein uS19 family.

In terms of biological role, protein S19 forms a complex with S13 that binds strongly to the 16S ribosomal RNA. The polypeptide is Small ribosomal subunit protein uS19 (Marinobacter nauticus (strain ATCC 700491 / DSM 11845 / VT8) (Marinobacter aquaeolei)).